Reading from the N-terminus, the 233-residue chain is Large ribosomal subunit protein uL1 (233 aa).

This sequence belongs to the universal ribosomal protein uL1 family. In terms of assembly, part of the 50S ribosomal subunit.

Functionally, binds directly to 23S rRNA. The L1 stalk is quite mobile in the ribosome, and is involved in E site tRNA release. Its function is as follows. Protein L1 is also a translational repressor protein, it controls the translation of the L11 operon by binding to its mRNA. This Rhizobium etli (strain CIAT 652) protein is Large ribosomal subunit protein uL1.